Consider the following 376-residue polypeptide: E3 ubiquitin-protein ligase RNF133 (376 aa).

The 103-residue stretch at 65-167 (SSTLKRVAGV…LKGTEIFHLI (103 aa)) folds into the PA domain. A helical transmembrane segment spans residues 190 to 210 (YLVSFVIVTTATLAYFIFYHI). Residues 256-297 (CVICFEHYKPNDIVRILTCKHFFHKNCIDPWILSHGTCPICK) form an RING-type; atypical zinc finger. Positions 328–376 (TLSPSEEETNNEVSPAGTSDKVIHVEENPTSQNNDSQPHSVVEDVHPSP) are disordered. The segment covering 355-366 (NPTSQNNDSQPH) has biased composition (polar residues).

Interacts with E3 ligase UBE2J1. Auto-ubiquitinated.

Its subcellular location is the endoplasmic reticulum membrane. It catalyses the reaction S-ubiquitinyl-[E2 ubiquitin-conjugating enzyme]-L-cysteine + [acceptor protein]-L-lysine = [E2 ubiquitin-conjugating enzyme]-L-cysteine + N(6)-ubiquitinyl-[acceptor protein]-L-lysine.. It functions in the pathway protein modification; protein ubiquitination. Functionally, has E3 ubiquitin-protein ligase activity. Plays a role in male fecundity through the interaction with the E2 ubituitin-protein ligase UBE2J1. The chain is E3 ubiquitin-protein ligase RNF133 (RNF133) from Macaca fascicularis (Crab-eating macaque).